A 198-amino-acid chain; its full sequence is Large ribosomal subunit protein eL19 (198 aa).

Disordered regions lie at residues Y66–A85 and K150–Q177. The segment covering R71–G83 has biased composition (basic residues). Residues Q160 to Q177 are compositionally biased toward basic and acidic residues.

This sequence belongs to the eukaryotic ribosomal protein eL19 family.

This is Large ribosomal subunit protein eL19 (rpl-19) from Caenorhabditis elegans.